Reading from the N-terminus, the 154-residue chain is 17 kDa surface antigen (154 aa).

The N-terminal stretch at 1 to 19 is a signal peptide; that stretch reads MKLLSKIMIIALAASMLQA. The N-palmitoyl cysteine moiety is linked to residue C20. Residue C20 is the site of S-diacylglycerol cysteine attachment.

This sequence belongs to the rickettsiale 17 kDa surface antigen family.

The protein resides in the cell outer membrane. The protein is 17 kDa surface antigen (omp) of Rickettsia rhipicephali.